A 209-amino-acid chain; its full sequence is Methylated-DNA--protein-cysteine methyltransferase (209 aa).

Zn(2+) is bound at residue Cys5. Ser14 carries the post-translational modification Phosphoserine. Zn(2+) is bound by residues Cys24, His29, and His89. Residues Thr99, Tyr118, Gln119, Asn127, and Arg132 each contribute to the DNA site. The Nucleophile; methyl group acceptor role is filled by Cys149. DNA is bound at residue Ser155.

This sequence belongs to the MGMT family. Zn(2+) serves as cofactor.

The protein localises to the nucleus. The catalysed reaction is a 6-O-methyl-2'-deoxyguanosine in DNA + L-cysteinyl-[protein] = S-methyl-L-cysteinyl-[protein] + a 2'-deoxyguanosine in DNA. It carries out the reaction a 4-O-methyl-thymidine in DNA + L-cysteinyl-[protein] = a thymidine in DNA + S-methyl-L-cysteinyl-[protein]. In terms of biological role, involved in the cellular defense against the biological effects of O6-methylguanine (O6-MeG) and O4-methylthymine (O4-MeT) in DNA. Repairs the methylated nucleobase in DNA by stoichiometrically transferring the methyl group to a cysteine residue in the enzyme. This is a suicide reaction: the enzyme is irreversibly inactivated. The protein is Methylated-DNA--protein-cysteine methyltransferase (Mgmt) of Rattus norvegicus (Rat).